The following is a 274-amino-acid chain: Orotidine 5'-phosphate decarboxylase (274 aa).

The Proton donor role is filled by K95.

Belongs to the OMP decarboxylase family. Type 2 subfamily.

The enzyme catalyses orotidine 5'-phosphate + H(+) = UMP + CO2. It functions in the pathway pyrimidine metabolism; UMP biosynthesis via de novo pathway; UMP from orotate: step 2/2. This is Orotidine 5'-phosphate decarboxylase from Variovorax paradoxus (strain S110).